The sequence spans 254 residues: Pimeloyl-[acyl-carrier protein] methyl ester esterase (254 aa).

Substrate is bound by residues W20, 80–81 (SL), and 141–145 (FLALQ). Residue S80 is the Nucleophile of the active site. Catalysis depends on residues D205 and H233. H233 provides a ligand contact to substrate.

The protein belongs to the AB hydrolase superfamily. Carboxylesterase BioH family. In terms of assembly, monomer.

The protein localises to the cytoplasm. It carries out the reaction 6-carboxyhexanoyl-[ACP] methyl ester + H2O = 6-carboxyhexanoyl-[ACP] + methanol + H(+). It participates in cofactor biosynthesis; biotin biosynthesis. Functionally, the physiological role of BioH is to remove the methyl group introduced by BioC when the pimeloyl moiety is complete. It allows to synthesize pimeloyl-ACP via the fatty acid synthetic pathway through the hydrolysis of the ester bonds of pimeloyl-ACP esters. The chain is Pimeloyl-[acyl-carrier protein] methyl ester esterase from Methylococcus capsulatus (strain ATCC 33009 / NCIMB 11132 / Bath).